The primary structure comprises 380 residues: MKKIILLGATGSIGTQTLTIIRENPEKFQLVAFSFGRNIERGRAIIQEFKPKMVAVWHTRDRVTLESEFPDVKFFNGLDGLREVATYLDGDVLLNAVMGSVGLLPTLDAIEAGKAIAIANKETLVTAGHLVMQAAKEKNISLLPVDSEHSAILQALNGENRERIEKIILTASGGSFRDKTREQLSEVTVKEALKHPNWNMGNKLTIDSATMFNKGLEVMEAHWLFGVDYDDIEVVIQRESIVHSMVQFVDGSFIAQLGTPDMRMPIQYALTYPDRLSIPYEKEFRITDFSALHFEEVNYERFPALKLAYNAGKIGGTMPTVLNAANEIAVAGFLNGQVAFYNIEALVENAMNRHTSISNPNLDTILQVDQETRAYVKTLL.

NADPH contacts are provided by threonine 10, glycine 11, serine 12, isoleucine 13, glycine 36, arginine 37, asparagine 38, and asparagine 120. Residue lysine 121 participates in 1-deoxy-D-xylulose 5-phosphate binding. Residue glutamate 122 participates in NADPH binding. Position 146 (aspartate 146) interacts with Mn(2+). 1-deoxy-D-xylulose 5-phosphate contacts are provided by serine 147, glutamate 148, serine 172, and histidine 195. Residue glutamate 148 coordinates Mn(2+). Glycine 201 provides a ligand contact to NADPH. 1-deoxy-D-xylulose 5-phosphate is bound by residues serine 208, asparagine 213, lysine 214, and glutamate 217. Glutamate 217 provides a ligand contact to Mn(2+).

The protein belongs to the DXR family. The cofactor is Mg(2+). Mn(2+) is required as a cofactor.

The catalysed reaction is 2-C-methyl-D-erythritol 4-phosphate + NADP(+) = 1-deoxy-D-xylulose 5-phosphate + NADPH + H(+). The protein operates within isoprenoid biosynthesis; isopentenyl diphosphate biosynthesis via DXP pathway; isopentenyl diphosphate from 1-deoxy-D-xylulose 5-phosphate: step 1/6. In terms of biological role, catalyzes the NADPH-dependent rearrangement and reduction of 1-deoxy-D-xylulose-5-phosphate (DXP) to 2-C-methyl-D-erythritol 4-phosphate (MEP). This chain is 1-deoxy-D-xylulose 5-phosphate reductoisomerase, found in Listeria innocua serovar 6a (strain ATCC BAA-680 / CLIP 11262).